The primary structure comprises 90 residues: uncharacterized protein (90 aa).

The protein to E.coli RlpA.

This is an uncharacterized protein from Synechocystis sp. (strain ATCC 27184 / PCC 6803 / Kazusa).